The sequence spans 174 residues: Scytalone dehydratase-like protein Arp1 (174 aa).

Residue Tyr49 participates in substrate binding. Active-site residues include His84 and His109. Asn130 serves as a coordination point for substrate.

It belongs to the scytalone dehydratase family. As to quaternary structure, homotrimer. Each subunit contains an active site, located in the central part of the hydrophobic core of the monomer, which functions independently.

In terms of biological role, scytalone dehydratase-like protein; part of the Pks2 gene cluster that mediates the formation of infectious structures (appressoria), enabling these fungi to kill insects faster. The product of the Pks2 gene cluster is different from the one of Pks1 and has still not been identified. This Metarhizium majus (strain ARSEF 297) protein is Scytalone dehydratase-like protein Arp1.